A 159-amino-acid polypeptide reads, in one-letter code: Aspartate carbamoyltransferase regulatory chain (159 aa).

Cysteine 113, cysteine 118, cysteine 142, and cysteine 145 together coordinate Zn(2+).

This sequence belongs to the PyrI family. As to quaternary structure, contains catalytic and regulatory chains. Zn(2+) serves as cofactor.

In terms of biological role, involved in allosteric regulation of aspartate carbamoyltransferase. The chain is Aspartate carbamoyltransferase regulatory chain from Saccharolobus islandicus (strain Y.N.15.51 / Yellowstone #2) (Sulfolobus islandicus).